The following is a 921-amino-acid chain: Guanylate kinase-associated protein mars (921 aa).

The residue at position 49 (S49) is a Phosphoserine. T51 is subject to Phosphothreonine. A phosphoserine mark is found at S76 and S170. At Y172 the chain carries Phosphotyrosine. Disordered regions lie at residues 179–208 and 273–325; these read GKGK…TVAA and RPTP…PLGN. Low complexity-rich tracts occupy residues 193-208 and 273-285; these read KPTS…TVAA and RPTP…AKTP. Position 444 is a phosphoserine (S444). The tract at residues 500-531 is disordered; that stretch reads QTTVKEDTGDSTLVPEGTKTPPRRESNGMPNY. T519 is subject to Phosphothreonine. The residue at position 554 (S554) is a Phosphoserine. Disordered regions lie at residues 641 to 660 and 743 to 763; these read AGAT…SKPV and TKVE…RHSS. 2 positions are modified to phosphoserine: S785 and S792. Disordered regions lie at residues 809–833 and 861–921; these read QNAA…TKRQ and ETVG…SEFM. T826 is modified (phosphothreonine). A compositionally biased stretch (polar residues) spans 878 to 907; that stretch reads EASTESGSLEQNPGRDSNQENEATPRTYTL.

This sequence belongs to the SAPAP family. In terms of tissue distribution, expressed in the central nervous system and at different stages of gametogenesis. In embryos, it is expressed in central nervous system and brain. In testis, it is strongly expressed in pre-meiotic germ cells, but is not found in somatic or post-meiotic cells.

The protein resides in the cell membrane. The protein localises to the nucleus. It is found in the nucleoplasm. It localises to the cytoplasm. Its subcellular location is the cytoskeleton. The protein resides in the spindle. In terms of biological role, cell cycle regulator. The chain is Guanylate kinase-associated protein mars (mars) from Drosophila melanogaster (Fruit fly).